A 78-amino-acid chain; its full sequence is Acyl carrier protein (78 aa).

The Carrier domain occupies S2–K77. O-(pantetheine 4'-phosphoryl)serine is present on S37.

This sequence belongs to the acyl carrier protein (ACP) family. In terms of processing, 4'-phosphopantetheine is transferred from CoA to a specific serine of apo-ACP by AcpS. This modification is essential for activity because fatty acids are bound in thioester linkage to the sulfhydryl of the prosthetic group.

It is found in the cytoplasm. It functions in the pathway lipid metabolism; fatty acid biosynthesis. Carrier of the growing fatty acid chain in fatty acid biosynthesis. The chain is Acyl carrier protein from Zymomonas mobilis subsp. mobilis (strain ATCC 31821 / ZM4 / CP4).